A 119-amino-acid polypeptide reads, in one-letter code: Phosphoribosyl-AMP cyclohydrolase (119 aa).

Position 77 (aspartate 77) interacts with Mg(2+). Position 78 (cysteine 78) interacts with Zn(2+). The Mg(2+) site is built by aspartate 79 and aspartate 81. Positions 94 and 101 each coordinate Zn(2+).

It belongs to the PRA-CH family. As to quaternary structure, homodimer. Requires Mg(2+) as cofactor. Zn(2+) is required as a cofactor.

It is found in the cytoplasm. It catalyses the reaction 1-(5-phospho-beta-D-ribosyl)-5'-AMP + H2O = 1-(5-phospho-beta-D-ribosyl)-5-[(5-phospho-beta-D-ribosylamino)methylideneamino]imidazole-4-carboxamide. It participates in amino-acid biosynthesis; L-histidine biosynthesis; L-histidine from 5-phospho-alpha-D-ribose 1-diphosphate: step 3/9. Catalyzes the hydrolysis of the adenine ring of phosphoribosyl-AMP. This is Phosphoribosyl-AMP cyclohydrolase from Ruegeria pomeroyi (strain ATCC 700808 / DSM 15171 / DSS-3) (Silicibacter pomeroyi).